A 453-amino-acid chain; its full sequence is Exodeoxyribonuclease 7 large subunit (453 aa).

This sequence belongs to the XseA family. Heterooligomer composed of large and small subunits.

It is found in the cytoplasm. It catalyses the reaction Exonucleolytic cleavage in either 5'- to 3'- or 3'- to 5'-direction to yield nucleoside 5'-phosphates.. Its function is as follows. Bidirectionally degrades single-stranded DNA into large acid-insoluble oligonucleotides, which are then degraded further into small acid-soluble oligonucleotides. This is Exodeoxyribonuclease 7 large subunit from Rickettsia typhi (strain ATCC VR-144 / Wilmington).